Here is a 129-residue protein sequence, read N- to C-terminus: Large ribosomal subunit protein bL21 (129 aa).

The disordered stretch occupies residues Thr102 to Ala129. Positions Glu116–Ala129 are enriched in basic and acidic residues.

Belongs to the bacterial ribosomal protein bL21 family. In terms of assembly, part of the 50S ribosomal subunit. Contacts protein L20.

In terms of biological role, this protein binds to 23S rRNA in the presence of protein L20. The polypeptide is Large ribosomal subunit protein bL21 (Bradyrhizobium diazoefficiens (strain JCM 10833 / BCRC 13528 / IAM 13628 / NBRC 14792 / USDA 110)).